The primary structure comprises 222 residues: Hexitol phosphatase B (222 aa).

Catalysis depends on Asp-13, which acts as the Nucleophile. A divalent metal cation-binding residues include Asp-13 and Asp-15. Residues 13–15, 115–116, and Lys-148 contribute to the substrate site; these read DMD and SA. The active-site Proton donor is Asp-15. Asp-173 lines the a divalent metal cation pocket.

The protein belongs to the HAD-like hydrolase superfamily. CbbY/CbbZ/Gph/YieH family. It depends on Mg(2+) as a cofactor. Mn(2+) serves as cofactor. Requires Co(2+) as cofactor. Zn(2+) is required as a cofactor.

It carries out the reaction sugar phosphate + H2O = sugar + phosphate.. The enzyme catalyses 2-deoxy-D-glucose 6-phosphate + H2O = 2-deoxy-D-glucose + phosphate. The catalysed reaction is D-mannitol 1-phosphate + H2O = D-mannitol + phosphate. It catalyses the reaction D-sorbitol 6-phosphate + H2O = D-sorbitol + phosphate. Its function is as follows. Sugar-phosphate phosphohydrolase that catalyzes the dephosphorylation of D-mannitol 1-phosphate and D-sorbitol 6-phosphate. Also catalyzes the dephosphorylation of 2-deoxyglucose 6-phosphate (2dGlu6P); this is a biologically important activity in vivo since it contributes to the elimination of this toxic compound and plays an important role in the resistance of E.coli to 2-deoxyglucose. The protein is Hexitol phosphatase B of Escherichia coli O157:H7.